The following is a 250-amino-acid chain: Small ribosomal subunit protein uS2 (250 aa).

It belongs to the universal ribosomal protein uS2 family.

This Albidiferax ferrireducens (strain ATCC BAA-621 / DSM 15236 / T118) (Rhodoferax ferrireducens) protein is Small ribosomal subunit protein uS2.